Consider the following 335-residue polypeptide: Methionine import ATP-binding protein MetN 1 (335 aa).

Residues 2-242 form the ABC transporter domain; the sequence is IEFQNVHKTY…PKHPTTRRFV (241 aa). Residue 38 to 45 participates in ATP binding; that stretch reads GHSGAGKS.

The protein belongs to the ABC transporter superfamily. Methionine importer (TC 3.A.1.24) family. In terms of assembly, the complex is composed of two ATP-binding proteins (MetN), two transmembrane proteins (MetI) and a solute-binding protein (MetQ).

The protein localises to the cell inner membrane. It catalyses the reaction L-methionine(out) + ATP + H2O = L-methionine(in) + ADP + phosphate + H(+). The catalysed reaction is D-methionine(out) + ATP + H2O = D-methionine(in) + ADP + phosphate + H(+). In terms of biological role, part of the ABC transporter complex MetNIQ involved in methionine import. Responsible for energy coupling to the transport system. This Pseudomonas fluorescens (strain ATCC BAA-477 / NRRL B-23932 / Pf-5) protein is Methionine import ATP-binding protein MetN 1.